We begin with the raw amino-acid sequence, 299 residues long: Ribosomal RNA small subunit methyltransferase H (299 aa).

Residues 45-47 (GGH), Asp64, Phe92, Asp108, and Gln115 contribute to the S-adenosyl-L-methionine site. The interval 275 to 299 (PQSDEQAKNPRSRSAKLRLAQRKEQ) is disordered. A compositionally biased stretch (basic residues) spans 284-299 (PRSRSAKLRLAQRKEQ).

The protein belongs to the methyltransferase superfamily. RsmH family.

It is found in the cytoplasm. The catalysed reaction is cytidine(1402) in 16S rRNA + S-adenosyl-L-methionine = N(4)-methylcytidine(1402) in 16S rRNA + S-adenosyl-L-homocysteine + H(+). Functionally, specifically methylates the N4 position of cytidine in position 1402 (C1402) of 16S rRNA. This is Ribosomal RNA small subunit methyltransferase H from Gloeothece citriformis (strain PCC 7424) (Cyanothece sp. (strain PCC 7424)).